Here is a 447-residue protein sequence, read N- to C-terminus: Methylenetetrahydrofolate--tRNA-(uracil-5-)-methyltransferase TrmFO (447 aa).

FAD is bound at residue 13-18; the sequence is GAGLAG.

This sequence belongs to the MnmG family. TrmFO subfamily. Requires FAD as cofactor.

The protein localises to the cytoplasm. It catalyses the reaction uridine(54) in tRNA + (6R)-5,10-methylene-5,6,7,8-tetrahydrofolate + NADH + H(+) = 5-methyluridine(54) in tRNA + (6S)-5,6,7,8-tetrahydrofolate + NAD(+). It carries out the reaction uridine(54) in tRNA + (6R)-5,10-methylene-5,6,7,8-tetrahydrofolate + NADPH + H(+) = 5-methyluridine(54) in tRNA + (6S)-5,6,7,8-tetrahydrofolate + NADP(+). Its function is as follows. Catalyzes the folate-dependent formation of 5-methyl-uridine at position 54 (M-5-U54) in all tRNAs. The protein is Methylenetetrahydrofolate--tRNA-(uracil-5-)-methyltransferase TrmFO of Streptococcus thermophilus (strain ATCC BAA-491 / LMD-9).